Consider the following 247-residue polypeptide: ATP synthase subunit a, chloroplastic (247 aa).

Helical transmembrane passes span 28 to 48 (GQVLITSWIVVAVIGVICLLG), 95 to 115 (VPFLGTIFLFIFVSNWSGALI), 134 to 154 (INTTVALALLTSIAYFYAGIS), 199 to 219 (LVVGVLVSLVPLVVPIPIMLL), and 220 to 240 (GLFTSAIQALVFATLAGAYIG).

Belongs to the ATPase A chain family. As to quaternary structure, F-type ATPases have 2 components, CF(1) - the catalytic core - and CF(0) - the membrane proton channel. CF(1) has five subunits: alpha(3), beta(3), gamma(1), delta(1), epsilon(1). CF(0) has four main subunits: a, b, b' and c.

It localises to the plastid. It is found in the chloroplast thylakoid membrane. Functionally, key component of the proton channel; it plays a direct role in the translocation of protons across the membrane. This chain is ATP synthase subunit a, chloroplastic, found in Chlorella vulgaris (Green alga).